A 147-amino-acid polypeptide reads, in one-letter code: Peptide methionine sulfoxide reductase MsrB (147 aa).

In terms of domain architecture, MsrB spans 8–131; it reads KEELKKILTE…NSASLKFIPK (124 aa). Catalysis depends on cysteine 120, which acts as the Nucleophile.

This sequence belongs to the MsrB Met sulfoxide reductase family.

It carries out the reaction L-methionyl-[protein] + [thioredoxin]-disulfide + H2O = L-methionyl-(R)-S-oxide-[protein] + [thioredoxin]-dithiol. The protein is Peptide methionine sulfoxide reductase MsrB of Clostridium perfringens (strain SM101 / Type A).